A 226-amino-acid polypeptide reads, in one-letter code: MLIVIDALLAEAEVLKWRARLEDAEWLDGRGTGGTLSAAVKSNLQLPDTSELAINLGNTIVQKLGVHPLFLSAALPEKIYPPKFNCYRNGGAYGTHVDSAIMVMPNKQSLRTDISATLFLSDPDSYDGGELEIETAFGAQAVKLNAGDLVLYPSSSLHRVTPVTRGQRVASFIWIQSMVPDEAERALLFDLDQSIQSLISEKPADDPTLLRLTSVYHNLLRRYAKF.

Residues 78 to 177 (KIYPPKFNCY…RVASFIWIQS (100 aa)) form the Fe2OG dioxygenase domain. Residues H96, D98, and H158 each coordinate Fe cation. Residue R168 participates in 2-oxoglutarate binding.

Fe(2+) is required as a cofactor. The cofactor is L-ascorbate.

The protein is PKHD-type hydroxylase TERTU_2553 of Teredinibacter turnerae (strain ATCC 39867 / T7901).